A 351-amino-acid chain; its full sequence is MYSLARPFLFSLDAERAHGLGLSALDLAYRTGTTPLLAARIAPMPSTVFGLTFPNPVGLAAGLDKNGEHIDALFALGFGFVEIGTITPRPQAGNPQPRLFRLPAHNAIINRMGFNNAGVDALVRNVERARNRRGMLGINIGKNKDTPNEQAADDYIACLDKVYPLADYITVNISSPNTAGLRELQEETSLRQLVSQLRERQESLAARYGRRVPMLVKVAPDLSERDIDAAARVLGELQVDGVIATNTTIDHSKVAGDPLANEAGGLSGAPVLEQSTLVLRRLRARLPESMPLIGVGGILSGADAVAKMAAGAALVQCYSGLIFRGPSLVSECVEAIRRRREAPSRGAVAPL.

Residues 61 to 65 and T85 each bind FMN; that span reads AGLDK. A substrate-binding site is contributed by K65. 110-114 serves as a coordination point for substrate; it reads NRMGF. N139 and N172 together coordinate FMN. N172 serves as a coordination point for substrate. S175 functions as the Nucleophile in the catalytic mechanism. N177 provides a ligand contact to substrate. Residues K217 and T245 each coordinate FMN. 246–247 provides a ligand contact to substrate; that stretch reads NT. FMN contacts are provided by residues G268, G297, and 318-319; that span reads YS.

The protein belongs to the dihydroorotate dehydrogenase family. Type 2 subfamily. As to quaternary structure, monomer. It depends on FMN as a cofactor.

The protein localises to the cell membrane. The enzyme catalyses (S)-dihydroorotate + a quinone = orotate + a quinol. It functions in the pathway pyrimidine metabolism; UMP biosynthesis via de novo pathway; orotate from (S)-dihydroorotate (quinone route): step 1/1. In terms of biological role, catalyzes the conversion of dihydroorotate to orotate with quinone as electron acceptor. This Stenotrophomonas maltophilia (strain R551-3) protein is Dihydroorotate dehydrogenase (quinone).